The following is a 126-amino-acid chain: Large ribosomal subunit protein bL12c (126 aa).

Belongs to the bacterial ribosomal protein bL12 family. In terms of assembly, homodimer. Part of the ribosomal stalk of the 50S ribosomal subunit. Forms a multimeric L10(L12)X complex, where L10 forms an elongated spine to which 2 to 4 L12 dimers bind in a sequential fashion. Binds GTP-bound translation factors.

The protein resides in the plastid. It localises to the cyanelle. Forms part of the ribosomal stalk which helps the ribosome interact with GTP-bound translation factors. Is thus essential for accurate translation. The polypeptide is Large ribosomal subunit protein bL12c (Cyanophora paradoxa).